The chain runs to 152 residues: Transcriptional regulator MraZ (152 aa).

SpoVT-AbrB domains lie at 5-52 (ATLV…PLPE) and 81-124 (ASEC…DETT).

The protein belongs to the MraZ family. In terms of assembly, forms oligomers.

Its subcellular location is the cytoplasm. It is found in the nucleoid. Negatively regulates its own expression and that of the subsequent genes in the proximal part of the division and cell wall (dcw) gene cluster. Acts by binding directly to DNA. May also regulate the expression of genes outside the dcw cluster. This Shigella flexneri serotype 5b (strain 8401) protein is Transcriptional regulator MraZ.